The primary structure comprises 971 residues: Isoleucine--tRNA ligase (971 aa).

The 'HIGH' region signature appears at 60-70; that stretch reads PYANGDLHIGH. L-isoleucyl-5'-AMP is bound at residue Glu-563. Positions 604 to 608 match the 'KMSKS' region motif; the sequence is KMSKS. Lys-607 provides a ligand contact to ATP. The Zn(2+) site is built by Cys-922, Cys-925, Cys-942, and Cys-945.

It belongs to the class-I aminoacyl-tRNA synthetase family. IleS type 1 subfamily. Monomer. Requires Zn(2+) as cofactor.

It is found in the cytoplasm. The catalysed reaction is tRNA(Ile) + L-isoleucine + ATP = L-isoleucyl-tRNA(Ile) + AMP + diphosphate. Catalyzes the attachment of isoleucine to tRNA(Ile). As IleRS can inadvertently accommodate and process structurally similar amino acids such as valine, to avoid such errors it has two additional distinct tRNA(Ile)-dependent editing activities. One activity is designated as 'pretransfer' editing and involves the hydrolysis of activated Val-AMP. The other activity is designated 'posttransfer' editing and involves deacylation of mischarged Val-tRNA(Ile). The protein is Isoleucine--tRNA ligase of Acaryochloris marina (strain MBIC 11017).